The following is a 185-amino-acid chain: Auxin-responsive protein IAA34 (185 aa).

Residues 63 to 67 carry the EAR-like (transcriptional repression) motif; sequence LGLSL. The region spanning 92–180 is the PB1 domain; it reads WGYVKVTMDG…ERLRITRRND (89 aa).

It belongs to the Aux/IAA family. Homodimers and heterodimers.

The protein localises to the nucleus. In terms of biological role, aux/IAA proteins are short-lived transcriptional factors that function as repressors of early auxin response genes at low auxin concentrations. Repression is thought to result from the interaction with auxin response factors (ARFs), proteins that bind to the auxin-responsive promoter element (AuxRE). Formation of heterodimers with ARF proteins may alter their ability to modulate early auxin response genes expression. The polypeptide is Auxin-responsive protein IAA34 (IAA34) (Arabidopsis thaliana (Mouse-ear cress)).